The sequence spans 275 residues: Large ribosomal subunit protein uL2cz (275 aa).

Disordered stretches follow at residues 1 to 20 and 225 to 275; these read MAIH…AVDS and NPVD…RRSK.

It belongs to the universal ribosomal protein uL2 family. Part of the 50S ribosomal subunit.

It is found in the plastid. The protein resides in the chloroplast. In Populus alba (White poplar), this protein is Large ribosomal subunit protein uL2cz (rpl2-A).